A 454-amino-acid polypeptide reads, in one-letter code: Glutamate mutase epsilon subunit (454 aa).

Residue R67 participates in L-glutamate binding. G69 is a binding site for adenosylcob(III)alamin. R99 is a binding site for L-glutamate. An adenosylcob(III)alamin-binding site is contributed by N122. L-glutamate is bound by residues 148-149 (RH), E170, and Y176. P179 serves as a coordination point for adenosylcob(III)alamin. L-glutamate is bound at residue Y180. Residues F296, K325, E329, and I333 each coordinate adenosylcob(III)alamin.

Belongs to the methylaspartate mutase GlmE subunit family. In terms of assembly, heterotetramer composed of 2 epsilon subunits (GlmE) and 2 sigma subunits (GlmS). GlmE exists as a homodimer and GlmS as a monomer. The cofactor is adenosylcob(III)alamin.

The enzyme catalyses (2S,3S)-3-methyl-L-aspartate = L-glutamate. The protein operates within amino-acid degradation; L-glutamate degradation via mesaconate pathway; acetate and pyruvate from L-glutamate: step 1/4. Functionally, catalyzes the carbon skeleton rearrangement of L-glutamate to L-threo-3-methylaspartate ((2S,3S)-3-methylaspartate). The chain is Glutamate mutase epsilon subunit from Shigella dysenteriae serotype 1 (strain Sd197).